We begin with the raw amino-acid sequence, 401 residues long: S-adenosylmethionine synthase (401 aa).

G136–D141 is an ATP binding site.

It belongs to the AdoMet synthase 2 family. The cofactor is Mg(2+).

The catalysed reaction is L-methionine + ATP + H2O = S-adenosyl-L-methionine + phosphate + diphosphate. It functions in the pathway amino-acid biosynthesis; S-adenosyl-L-methionine biosynthesis; S-adenosyl-L-methionine from L-methionine: step 1/1. Catalyzes the formation of S-adenosylmethionine from methionine and ATP. The sequence is that of S-adenosylmethionine synthase from Pyrococcus furiosus (strain ATCC 43587 / DSM 3638 / JCM 8422 / Vc1).